Consider the following 151-residue polypeptide: Deoxyuridine 5'-triphosphate nucleotidohydrolase (151 aa).

Substrate is bound by residues 70-72, Asn83, 87-89, and Lys97; these read RSG and LID.

Belongs to the dUTPase family. It depends on Mg(2+) as a cofactor.

The catalysed reaction is dUTP + H2O = dUMP + diphosphate + H(+). The protein operates within pyrimidine metabolism; dUMP biosynthesis; dUMP from dCTP (dUTP route): step 2/2. Its function is as follows. This enzyme is involved in nucleotide metabolism: it produces dUMP, the immediate precursor of thymidine nucleotides and it decreases the intracellular concentration of dUTP so that uracil cannot be incorporated into DNA. The polypeptide is Deoxyuridine 5'-triphosphate nucleotidohydrolase (Idiomarina loihiensis (strain ATCC BAA-735 / DSM 15497 / L2-TR)).